The sequence spans 434 residues: Citrate-proton symporter (434 aa).

At 1–21 (MAQHTPATSRAGTFGAILRVT) the chain is on the cytoplasmic side. Residues 22–42 (SGNFLEQFDFFLFGFYATYIA) form a helical membrane-spanning segment. The Periplasmic segment spans residues 43–54 (RTFFPAESEFAS). The chain crosses the membrane as a helical span at residues 55 to 75 (LMLTFAVFGSGFLMRPVGAIV). Residues 76-87 (LGAYIDRIGRRK) lie on the Cytoplasmic side of the membrane. Residues 88 to 108 (GLMVTLAIMGCGTLLIALVPG) traverse the membrane as a helical segment. At 109-111 (YQT) the chain is on the periplasmic side. A helical transmembrane segment spans residues 112-132 (IGLAAPALVLLGRLLQGFSAG). The Cytoplasmic portion of the chain corresponds to 133–164 (VELGGVSVYLSEIATPGNKGFYTSWQSASQQV). The chain crosses the membrane as a helical span at residues 165–185 (AIVVAALIGYSLNITLGHDAI). Residue S186 is a topological domain, periplasmic. A helical membrane pass occupies residues 187-207 (EWGWRIPFFIGCMIIPLIFVL). The Cytoplasmic segment spans residues 208–238 (RRSLQETEAFLQRKHRPDTREIFATIAKNWR). The chain crosses the membrane as a helical span at residues 239–259 (IITAGTLLVAMTTTTFYFITV). At 260-276 (YTPTYGRTVLNLSARDS) the chain is on the periplasmic side. The helical transmembrane segment at 277–297 (LIVTMLVGVSNFIWLPIGGAI) threads the bilayer. The Cytoplasmic segment spans residues 298–304 (SDRIGRR). A helical membrane pass occupies residues 305–325 (AVLMGITLLALITTWPVMQWL). The Periplasmic segment spans residues 326–335 (TAAPDFTRMT). The helical transmembrane segment at 336–356 (LVLLWFSFFFGMYNGAMVAAL) threads the bilayer. Topologically, residues 357–366 (TEVMPVYVRT) are cytoplasmic. Residues 367–387 (VGFSLAFSLATAIFGGLTPAI) traverse the membrane as a helical segment. Over 388 to 400 (STALVKLTGDKSS) the chain is Periplasmic. Residues 401–421 (PGWWLMCAALCGLAATAMLFV) traverse the membrane as a helical segment. At 422–434 (RLSRGYIAAENKA) the chain is on the cytoplasmic side.

The protein belongs to the major facilitator superfamily. Metabolite:H+ Symporter (MHS) family (TC 2.A.1.6) family.

The protein localises to the cell inner membrane. Functionally, uptake of citrate across the boundary membrane with the concomitant transport of protons into the cell (symport system). In Salmonella typhi, this protein is Citrate-proton symporter (citA).